Consider the following 484-residue polypeptide: Fumarate hydratase class II (484 aa).

The segment at 1–22 (MPSILDLPIGTGATGKRKESDS) is disordered. Residues 110–112 (SGT), 141–144 (HPND), 151–153 (SSN), and Thr-199 each bind substrate. His-200 serves as the catalytic Proton donor/acceptor. Ser-330 is a catalytic residue. Substrate contacts are provided by residues Ser-331 and 336-338 (KVN).

This sequence belongs to the class-II fumarase/aspartase family. Fumarase subfamily. As to quaternary structure, homotetramer.

The protein localises to the cytoplasm. The enzyme catalyses (S)-malate = fumarate + H2O. Its pathway is carbohydrate metabolism; tricarboxylic acid cycle; (S)-malate from fumarate: step 1/1. In terms of biological role, involved in the TCA cycle. Catalyzes the stereospecific interconversion of fumarate to L-malate. This chain is Fumarate hydratase class II, found in Methanosarcina acetivorans (strain ATCC 35395 / DSM 2834 / JCM 12185 / C2A).